Here is a 122-residue protein sequence, read N- to C-terminus: Large ribosomal subunit protein uL14 (122 aa).

This sequence belongs to the universal ribosomal protein uL14 family. Part of the 50S ribosomal subunit. Forms a cluster with proteins L3 and L19. In the 70S ribosome, L14 and L19 interact and together make contacts with the 16S rRNA in bridges B5 and B8.

In terms of biological role, binds to 23S rRNA. Forms part of two intersubunit bridges in the 70S ribosome. The polypeptide is Large ribosomal subunit protein uL14 (Levilactobacillus brevis (strain ATCC 367 / BCRC 12310 / CIP 105137 / JCM 1170 / LMG 11437 / NCIMB 947 / NCTC 947) (Lactobacillus brevis)).